A 135-amino-acid polypeptide reads, in one-letter code: Large-conductance mechanosensitive channel (135 aa).

2 helical membrane-spanning segments follow: residues 10–30 (FAMR…AAFG) and 76–96 (GVFI…FLAI).

This sequence belongs to the MscL family. Homopentamer.

The protein resides in the cell inner membrane. Functionally, channel that opens in response to stretch forces in the membrane lipid bilayer. May participate in the regulation of osmotic pressure changes within the cell. This chain is Large-conductance mechanosensitive channel, found in Cronobacter sakazakii (strain ATCC BAA-894) (Enterobacter sakazakii).